The primary structure comprises 315 residues: Tetraacyldisaccharide 4'-kinase (315 aa).

45-52 lines the ATP pocket; the sequence is SVGGSGKT.

This sequence belongs to the LpxK family.

The catalysed reaction is a lipid A disaccharide + ATP = a lipid IVA + ADP + H(+). The protein operates within glycolipid biosynthesis; lipid IV(A) biosynthesis; lipid IV(A) from (3R)-3-hydroxytetradecanoyl-[acyl-carrier-protein] and UDP-N-acetyl-alpha-D-glucosamine: step 6/6. Its function is as follows. Transfers the gamma-phosphate of ATP to the 4'-position of a tetraacyldisaccharide 1-phosphate intermediate (termed DS-1-P) to form tetraacyldisaccharide 1,4'-bis-phosphate (lipid IVA). The polypeptide is Tetraacyldisaccharide 4'-kinase (Aquifex aeolicus (strain VF5)).